Consider the following 740-residue polypeptide: Pheromone-regulated membrane protein 10 (740 aa).

3 disordered regions span residues 1-48 (MGKN…RSGL), 65-97 (FADEDEVVEQDEAAQKTEAVASESSSLADKEEC), and 241-269 (NQPGGQAPQRPGLRKSAQTLSSETLPTGE). Positions 7 to 18 (QAAEGEEARRGS) are enriched in basic and acidic residues. The span at 19–33 (ESSGSSAEPSGAVAE) shows a compositional bias: low complexity. Residues 67 to 76 (DEDEVVEQDE) show a composition bias toward acidic residues. Over residues 256–267 (SAQTLSSETLPT) the composition is skewed to polar residues. The next 10 membrane-spanning stretches (helical) occupy residues 422–442 (AWMCVLLYGFCASMVTPFAFG), 445–465 (WINLVVSFGIGCCVGLLQFIV), 475–495 (VFEITASIVVSFCARALGSIP), 499–519 (ICFGSTVQGSLALILPGYIIL), 541–561 (IIYSLFLGFGITLGAALFGWI), 574–594 (ELSPWFRFIFVPGFALGLSLI), 599–619 (WSQIPVMVCIACSGYVVTYWS), 622–642 (HFTASTEFTASIGAFVIGIMG), 651–671 (GLAMTAMLPGIFVQVPSGIAS), and 707–727 (ITMIQVCIGISVGLFASTLVV).

It belongs to the ThrE exporter (TC 2.A.79) family.

It localises to the membrane. This is Pheromone-regulated membrane protein 10 from Eremothecium gossypii (strain ATCC 10895 / CBS 109.51 / FGSC 9923 / NRRL Y-1056) (Yeast).